Reading from the N-terminus, the 905-residue chain is MDDVERIQSENENLRKIRNRLMQWESKTDPLAALSIQQEEHLDVLTNLWRDSGPSAPAPTTPTQVGPTDSSAAATSQSGDDIRLPAEGLQNTNEFLLWFADVSAEIEQRGDADYHKYLQQLEQRKAECSHMLDQIAGAMERLGALCDEYDFVSQKTSALNTASEQLIEEQERLQELSHEIQRRLHYFSQVELLNQRLQSPTLSVASEAFRECLNKIDECLNYIEENPKFKDAAAYNVKYRQCLAKASGLVRNYVTSVINQATEATLHPKNNMPDASAALKAPDAAFALYYGKYQTAAAKVKRVAQLIESRSEHSLDYAQLMADLQQHYLAQRASVMSPAVNLSIQNVKVAHKGDHCSLTRSACAFLVHVCQDEQRLFYQFFSTGAPHLTVYLEGLCTILYDTMRPFIIHINHLETLAEICSILRIEMLEEHVQQNPVALEAFATIAHQLLQDVQERLVFRAHLYLQSDIQNFNPSSGDLAYPEKLEMMESIALSLQEPAPLRRSDSRNSMVSSVSSAVETESVATAYTVKQMNSPADLHGMWYPTVRRTLVCLSRLYRCVDRPIFQGLSQEALKLCIQSVSHAAGKISANKTPIDGELFEIKHLLILREQIAPFRVDFTVKETSLDFSKVKTAAFGLLQKRKQLFSMGSNNALLEFLLEGTPQIKEHLLDSRKEVDRQLKSVCEKYIKDAVQMLVGPLITFLEKAQSLLAQSTPATPQSPESTKASYVLRQSPWASPQQISSIIQETQRLIKAKLAVLQRSMQLYLSNRDTEFIIFRPIRNNIIQSFVKLEQLLTTNGYSTDDMIITSCPSAEQVSILLSSASILAAEGVASFAAAARKISTSSSVEGSTVGRKLSAMSNKSELVEEPKVEEVAGQIEVVPAEVQPPAKIEEEEVTETQTQANSE.

Residues 49 to 78 (WRDSGPSAPAPTTPTQVGPTDSSAAATSQS) are disordered. The segment covering 64-78 (QVGPTDSSAAATSQS) has biased composition (polar residues). Phosphoserine is present on residues Ser-841, Ser-845, Ser-856, Ser-859, and Ser-862. The interval 884–905 (VQPPAKIEEEEVTETQTQANSE) is disordered.

It belongs to the COG3 family. As to quaternary structure, component of the conserved oligomeric Golgi complex which is composed of eight different subunits and is required for normal Golgi morphology and localization.

It is found in the golgi apparatus membrane. Functionally, involved in ER-Golgi transport. The polypeptide is Conserved oligomeric Golgi complex subunit 3 (Cog3) (Drosophila melanogaster (Fruit fly)).